Here is an 845-residue protein sequence, read N- to C-terminus: Alanine--tRNA ligase (845 aa).

Zn(2+) contacts are provided by H552, H556, C653, and H657.

This sequence belongs to the class-II aminoacyl-tRNA synthetase family. Zn(2+) is required as a cofactor.

The protein resides in the cytoplasm. The catalysed reaction is tRNA(Ala) + L-alanine + ATP = L-alanyl-tRNA(Ala) + AMP + diphosphate. Catalyzes the attachment of alanine to tRNA(Ala) in a two-step reaction: alanine is first activated by ATP to form Ala-AMP and then transferred to the acceptor end of tRNA(Ala). Also edits incorrectly charged Ser-tRNA(Ala) and Gly-tRNA(Ala) via its editing domain. The sequence is that of Alanine--tRNA ligase from Campylobacter hominis (strain ATCC BAA-381 / DSM 21671 / CCUG 45161 / LMG 19568 / NCTC 13146 / CH001A).